The primary structure comprises 503 residues: MQLSMSFLIGFGTLVLALSARTFDLQGLSCNTDSTPGLIDLEIRRLCHTPTENVISCEVRYLNHTTINLPAVHTSCLKYHCKTYWGFFGSYSADRIINRYTGTVKGCLNNSAPEDPFECNWFYCCSAITTEICRCSITNVTVAVQTFPPFMYCSFADCSTVSQQELESGKAMLSDGSTLTYTPYILQSEVVNKTLNGTILCNSSSKIVSFDEFRRSYSLANGSYQSSSINVTCVNYTSSCRPRLKRRRRDTQQIEYLVHKLRPTLKDAWEDCEILQSLLLGVFGTGIASASQFLRGWLNHPDIIGYIVNGVGVVWQCHRVNVTFMAWNESTYYPPVDYNGRKYFLNDEGRLQTNTPEARPGLKRVMWFGRYFLGTVGSGVKPRRIRYNKTSHDYHLEEFEASLNMTPQTSIASGHETDPINHAYGTQADLLPYTRSSNITSTDTGSGWVHIGLPSFAFLNPLGWLRDLLAWAAWLGGVLYLISLCVSLPASFARRRRLGRWQE.

The first 22 residues, 1 to 22, serve as a signal peptide directing secretion; it reads MQLSMSFLIGFGTLVLALSART. At 23–467 the chain is on the extracellular side; sequence FDLQGLSCNT…FLNPLGWLRD (445 aa). N-linked (GlcNAc...) asparagine; by host glycans are attached at residues asparagine 63, asparagine 109, asparagine 139, asparagine 192, asparagine 196, asparagine 202, asparagine 221, asparagine 230, and asparagine 235. The tract at residues 274–315 is fusion peptide; sequence ILQSLLLGVFGTGIASASQFLRGWLNHPDIIGYIVNGVGVVW. 4 N-linked (GlcNAc...) asparagine; by host glycosylation sites follow: asparagine 321, asparagine 328, asparagine 388, and asparagine 438. The chain crosses the membrane as a helical span at residues 468–488; it reads LLAWAAWLGGVLYLISLCVSL. Residues 489–503 lie on the Cytoplasmic side of the membrane; the sequence is PASFARRRRLGRWQE.

Glycosated; Stabilizes it. In terms of processing, a portion of p57 is cleaved into p27 and p29. p27 and p29 are called gp43 when glycosylated, as they seem to have the same molecular weight.

It localises to the host endoplasmic reticulum membrane. The protein resides in the virion. The protein localises to the host cell membrane. Unprocessed envelope protein p57 is thought to be involved in attachment of the virus to its cell surface receptor. This attachment induces virion internalization predominantly through clathrin-dependent endocytosis. Its function is as follows. Envelope protein p27 and p29 presumably linked by disulfide bond are the viral type II fusion protein, involved in pH-dependent fusion within early endosomes after internalization of the virion by endocytosis. This is Envelope glycoprotein p57 (G) from Borna disease virus 1 (BoDV-1).